The sequence spans 161 residues: MNARRKKRLALATALIGGVAAIASLLLYALNSNLNLFYTPTEIVHGKKDTGVKPEIGQRIRVGGMVTVGSLVRDPESLHVEFAVHDAAGGEVMVTYDDLLPDLFREGQGIVAQGVLIEGGKLEATEVLAKHDENYMPPEVAEAMGQTHEKLEYDSTQKTGY.

At 1–8 (MNARRKKR) the chain is on the cytoplasmic side. Residues 9 to 29 (LALATALIGGVAAIASLLLYA) traverse the membrane as a helical; Signal-anchor for type II membrane protein segment. Topologically, residues 30 to 161 (LNSNLNLFYT…EYDSTQKTGY (132 aa)) are periplasmic. Heme is bound by residues H131 and Y135.

It belongs to the CcmE/CycJ family.

It localises to the cell inner membrane. Functionally, heme chaperone required for the biogenesis of c-type cytochromes. Transiently binds heme delivered by CcmC and transfers the heme to apo-cytochromes in a process facilitated by CcmF and CcmH. This chain is Cytochrome c-type biogenesis protein CcmE, found in Shewanella loihica (strain ATCC BAA-1088 / PV-4).